Reading from the N-terminus, the 316-residue chain is Acetaldehyde dehydrogenase 1 (316 aa).

12–15 (SGNI) contacts NAD(+). Cys132 functions as the Acyl-thioester intermediate in the catalytic mechanism. NAD(+)-binding positions include 163-171 (SAGPGTRAN) and Asn291.

Belongs to the acetaldehyde dehydrogenase family.

It catalyses the reaction acetaldehyde + NAD(+) + CoA = acetyl-CoA + NADH + H(+). The protein is Acetaldehyde dehydrogenase 1 of Pseudomonas putida (strain ATCC 700007 / DSM 6899 / JCM 31910 / BCRC 17059 / LMG 24140 / F1).